We begin with the raw amino-acid sequence, 967 residues long: Kinesin heavy chain (967 aa).

Residues 8-326 (NIKVICRVRP…LLFGQRAKTI (319 aa)) enclose the Kinesin motor domain. 85-92 (GQTSSGKT) serves as a coordination point for ATP. The interval 173 to 314 (VSSPEEVMEV…PASYNESETK (142 aa)) is microtubule-binding. Disordered stretches follow at residues 387 to 411 (VPAE…NEGD) and 923 to 967 (KPIR…ESKA). Positions 392 to 861 (PATSTTSLAG…RDNADLRCEL (470 aa)) form a coiled coil. A globular region spans residues 862–967 (PKLEKRLRAT…PIRMAPESKA (106 aa)). Residues 949–958 (QNGPMITSTP) are compositionally biased toward polar residues.

This sequence belongs to the TRAFAC class myosin-kinesin ATPase superfamily. Kinesin family. Kinesin subfamily. In terms of assembly, oligomer composed of two heavy chains and two light chains. Interacts with amyloid-beta precursor-like protein (via cytoplasmic domain).

The protein localises to the cytoplasm. It is found in the cytoskeleton. The protein resides in the cell projection. It localises to the axon. Its function is as follows. Kinesin is a microtubule-associated force-producing protein that may play a role in organelle transport. The polypeptide is Kinesin heavy chain (Doryteuthis pealeii (Longfin inshore squid)).